The primary structure comprises 236 residues: Peroxisomal membrane protein PMP27 (236 aa).

This sequence belongs to the peroxin-11 family. In terms of assembly, homooligomer. Interacts with PEX34.

Its subcellular location is the peroxisome membrane. In terms of biological role, involved in peroxisomal proliferation. Promotes peroxisome division and biogenesis. The protein is Peroxisomal membrane protein PMP27 (PEX11) of Saccharomyces cerevisiae (strain ATCC 204508 / S288c) (Baker's yeast).